Consider the following 276-residue polypeptide: Carboxysome assembly protein CcmO (276 aa).

2 consecutive BMC domains span residues alanine 16–proline 100 and alanine 120–proline 204. 2 disordered regions span residues methionine 200–proline 219 and glutamine 252–glutamine 276.

Belongs to the bacterial microcompartments protein family. In terms of assembly, homooligomerizes, possibly as a trimer, interacts with CcmK2 in the carboxysome.

It is found in the carboxysome. Its function is as follows. Required for formation of the carboxysome, a polyhedral inclusion where RuBisCO (ribulose bisphosphate carboxylase, rbcL-rbcS) is sequestered. Required for recruitment of major shell protein CcmK2 to the pre-carboxysome. Suggested to be a carboxysome shell protein, but it is not detected in gels, mass spectrometry or by protein sequencing. In terms of biological role, beta-carboxysome assembly initiates when soluble RuBisCO is condensed into a liquid matrix in a pre-carboxysome by the RbcS-like domains of probably both CcmM58 and CcmM35. CcmN interacts with the N-terminus of CcmM58, and then recruits the CcmK2 major shell protein via CcmN's encapsulation peptide. Shell formation requires CcmK proteins and CcmO. CcmL caps the otherwise elongated carboxysome. Once fully encapsulated carboxysomes are formed, they migrate within the cell probably via interactions with the cytoskeleton. This is Carboxysome assembly protein CcmO from Synechococcus elongatus (strain ATCC 33912 / PCC 7942 / FACHB-805) (Anacystis nidulans R2).